The sequence spans 125 residues: Glycine cleavage system H protein (125 aa).

Positions 22–104 constitute a Lipoyl-binding domain; sequence SYIIGITDFA…YDTGWILKLT (83 aa). K63 is modified (N6-lipoyllysine).

It belongs to the GcvH family. The glycine cleavage system is composed of four proteins: P, T, L and H. (R)-lipoate is required as a cofactor.

Functionally, the glycine cleavage system catalyzes the degradation of glycine. The H protein shuttles the methylamine group of glycine from the P protein to the T protein. Is also involved in protein lipoylation via its role as an octanoyl/lipoyl carrier protein intermediate. The protein is Glycine cleavage system H protein of Listeria welshimeri serovar 6b (strain ATCC 35897 / DSM 20650 / CCUG 15529 / CIP 8149 / NCTC 11857 / SLCC 5334 / V8).